The following is a 307-amino-acid chain: uncharacterized protein (307 aa).

An ABC transporter domain is found at Val-5–Pro-233. Gly-37 to Thr-44 is an ATP binding site.

This sequence belongs to the ABC transporter superfamily.

This is an uncharacterized protein from Bacillus subtilis (strain 168).